Consider the following 119-residue polypeptide: Flagellar transcriptional regulator FlhD (119 aa).

Belongs to the FlhD family. Homodimer; disulfide-linked. Forms a heterohexamer composed of two FlhC and four FlhD subunits. Each FlhC binds a FlhD dimer, forming a heterotrimer, and a hexamer assembles by dimerization of two heterotrimers.

The protein localises to the cytoplasm. Functions in complex with FlhC as a master transcriptional regulator that regulates transcription of several flagellar and non-flagellar operons by binding to their promoter region. Activates expression of class 2 flagellar genes, including fliA, which is a flagellum-specific sigma factor that turns on the class 3 genes. Also regulates genes whose products function in a variety of physiological pathways. The sequence is that of Flagellar transcriptional regulator FlhD from Yersinia enterocolitica.